A 130-amino-acid polypeptide reads, in one-letter code: C-X-C motif chemokine 5 (130 aa).

Residues 1–37 (MSFQLRSSARIPSRSCSSFTLLAFLLLFTLPQHRAQA) form the signal peptide. 2 cysteine pairs are disulfide-bonded: Cys-50/Cys-76 and Cys-52/Cys-93.

It belongs to the intercrine alpha (chemokine CxC) family. Monomer. Homodimer.

It is found in the secreted. Functionally, may participate in the recruitment of inflammatory cells by injured or infected tissue. The protein is C-X-C motif chemokine 5 (Cxcl5) of Rattus norvegicus (Rat).